The sequence spans 88 residues: Class II hydrophobin 1 (88 aa).

The N-terminal stretch at 1 to 15 (MKFFIATIFATGALA) is a signal peptide. Cystine bridges form between Cys-19-Cys-69, Cys-29-Cys-59, Cys-30-Cys-42, and Cys-70-Cys-81.

Belongs to the cerato-ulmin hydrophobin family. In terms of assembly, homodimer. Homodimers further self-assemble to form highly ordered films at water-air interfaces through intermolecular interactions.

It localises to the secreted. It is found in the cell wall. Functionally, aerial growth, conidiation, and dispersal of filamentous fungi in the environment rely upon a capability of their secreting small amphipathic proteins called hydrophobins (HPBs) with low sequence identity. Class I can self-assemble into an outermost layer of rodlet bundles on aerial cell surfaces, conferring cellular hydrophobicity that supports fungal growth, development and dispersal; whereas Class II form highly ordered films at water-air interfaces through intermolecular interactions but contribute nothing to the rodlet structure. This Trichoderma asperellum (strain ATCC 204424 / CBS 433.97 / NBRC 101777) protein is Class II hydrophobin 1.